A 157-amino-acid chain; its full sequence is S-ribosylhomocysteine lyase (157 aa).

Fe cation contacts are provided by His54, His58, and Cys124.

This sequence belongs to the LuxS family. As to quaternary structure, homodimer. Requires Fe cation as cofactor.

The enzyme catalyses S-(5-deoxy-D-ribos-5-yl)-L-homocysteine = (S)-4,5-dihydroxypentane-2,3-dione + L-homocysteine. In terms of biological role, involved in the synthesis of autoinducer 2 (AI-2) which is secreted by bacteria and is used to communicate both the cell density and the metabolic potential of the environment. The regulation of gene expression in response to changes in cell density is called quorum sensing. Catalyzes the transformation of S-ribosylhomocysteine (RHC) to homocysteine (HC) and 4,5-dihydroxy-2,3-pentadione (DPD). This Levilactobacillus brevis (strain ATCC 367 / BCRC 12310 / CIP 105137 / JCM 1170 / LMG 11437 / NCIMB 947 / NCTC 947) (Lactobacillus brevis) protein is S-ribosylhomocysteine lyase.